We begin with the raw amino-acid sequence, 327 residues long: Ferrochelatase (327 aa).

Fe cation is bound by residues histidine 187 and glutamate 265.

This sequence belongs to the ferrochelatase family.

Its subcellular location is the cytoplasm. The catalysed reaction is heme b + 2 H(+) = protoporphyrin IX + Fe(2+). It functions in the pathway porphyrin-containing compound metabolism; protoheme biosynthesis; protoheme from protoporphyrin-IX: step 1/1. Functionally, catalyzes the ferrous insertion into protoporphyrin IX. The protein is Ferrochelatase of Chlamydia pneumoniae (Chlamydophila pneumoniae).